A 369-amino-acid polypeptide reads, in one-letter code: RNA-binding protein rnp24 (369 aa).

Disordered stretches follow at residues 1-77, 200-219, and 304-369; these read MEPI…KKKE, TDFSGRPSKPANTLSKTASI, and RMRN…IKFD. The RRM 1 domain maps to 105-206; that stretch reads WGIWVGNLSF…KSNTDFSGRP (102 aa). Residues 209–219 are compositionally biased toward polar residues; it reads PANTLSKTASI. The RRM 2 domain maps to 228–310; the sequence is SILFVGNLDF…RSKRMRNKSP (83 aa). Positions 325–341 are enriched in basic and acidic residues; that stretch reads QEDKPNFKRARKIDPRS. Residues 346-357 are compositionally biased toward low complexity; it reads AALAKAQRSSAA.

The protein localises to the nucleus. The polypeptide is RNA-binding protein rnp24 (rnp24) (Schizosaccharomyces pombe (strain 972 / ATCC 24843) (Fission yeast)).